The chain runs to 557 residues: Phosphoacetylglucosamine mutase (557 aa).

Catalysis depends on S67, which acts as the Phosphoserine intermediate. Mg(2+)-binding residues include S67, D298, D300, and D302. A Phosphoserine modification is found at S67. Substrate contacts are provided by residues 395 to 397 (EAN), 522 to 526 (RASGT), and R531.

Belongs to the phosphohexose mutase family. Mg(2+) is required as a cofactor.

The protein resides in the cytoplasm. It is found in the nucleus. It carries out the reaction N-acetyl-alpha-D-glucosamine 1-phosphate = N-acetyl-D-glucosamine 6-phosphate. The protein operates within nucleotide-sugar biosynthesis; UDP-N-acetyl-alpha-D-glucosamine biosynthesis; N-acetyl-alpha-D-glucosamine 1-phosphate from alpha-D-glucosamine 6-phosphate (route I): step 2/2. Its function is as follows. Catalyzes the conversion of GlcNAc-6-P into GlcNAc-1-P during the synthesis of uridine diphosphate/UDP-GlcNAc, which is a biosynthetic precursor of chitin and also supplies the amino sugars for N-linked oligosaccharides of glycoproteins. Also has phosphoglucomutase activity. The sequence is that of Phosphoacetylglucosamine mutase from Saccharomyces cerevisiae (strain ATCC 204508 / S288c) (Baker's yeast).